Consider the following 396-residue polypeptide: Elongation factor Tu (396 aa).

One can recognise a tr-type G domain in the interval 10 to 206 (KPHCNIGTIG…NVDEYIPQPE (197 aa)). Positions 19-26 (GHVDHGKT) are G1. 19–26 (GHVDHGKT) contacts GTP. A Mg(2+)-binding site is contributed by Thr-26. Residues 60 to 64 (GITIS) form a G2 region. The segment at 81 to 84 (DCPG) is G3. Residues 81–85 (DCPGH) and 136–139 (NKCD) each bind GTP. A G4 region spans residues 136–139 (NKCD). A G5 region spans residues 174–176 (SAL).

It belongs to the TRAFAC class translation factor GTPase superfamily. Classic translation factor GTPase family. EF-Tu/EF-1A subfamily. As to quaternary structure, monomer.

It localises to the cytoplasm. The catalysed reaction is GTP + H2O = GDP + phosphate + H(+). Functionally, GTP hydrolase that promotes the GTP-dependent binding of aminoacyl-tRNA to the A-site of ribosomes during protein biosynthesis. This chain is Elongation factor Tu, found in Bradyrhizobium sp. (strain BTAi1 / ATCC BAA-1182).